The chain runs to 353 residues: UPF0283 membrane protein YcjF (353 aa).

A run of 3 helical transmembrane segments spans residues 70-90 (MVMG…VQWT), 100-120 (VALG…GSVV), and 213-233 (ESTL…FIAW).

Belongs to the UPF0283 family.

The protein localises to the cell inner membrane. This chain is UPF0283 membrane protein YcjF, found in Escherichia coli O7:K1 (strain IAI39 / ExPEC).